We begin with the raw amino-acid sequence, 380 residues long: 4-hydroxy-tetrahydrodipicolinate synthase, chloroplastic (380 aa).

Residues 1-44 are disordered; it reads MISPTNLLPARKITPVSNGGAATASPSSPSVAARPRRLPSGLQS. A chloroplast-targeting transit peptide spans 1–54; the sequence is MISPTNLLPARKITPVSNGGAATASPSSPSVAARPRRLPSGLQSVTGRGKVSLA. Over residues 21–33 the composition is skewed to low complexity; sequence AATASPSSPSVAA. Position 123 (Thr123) interacts with pyruvate. Tyr209 (proton donor/acceptor) is an active-site residue. Catalysis depends on Lys237, which acts as the Schiff-base intermediate with substrate. Position 276 (Ile276) interacts with pyruvate.

This sequence belongs to the DapA family. As to quaternary structure, tetramer of modified subunits derived from two genes in different combinations.

It localises to the plastid. It is found in the chloroplast. The enzyme catalyses L-aspartate 4-semialdehyde + pyruvate = (2S,4S)-4-hydroxy-2,3,4,5-tetrahydrodipicolinate + H2O + H(+). Its pathway is amino-acid biosynthesis; L-lysine biosynthesis via DAP pathway; (S)-tetrahydrodipicolinate from L-aspartate: step 3/4. With respect to regulation, sensitive to lysine inhibition. This inhibition increase in an allosteric manner with increasing concentration of the inhibitor. In terms of biological role, catalyzes the condensation of (S)-aspartate-beta-semialdehyde [(S)-ASA] and pyruvate to 4-hydroxy-tetrahydrodipicolinate (HTPA). The sequence is that of 4-hydroxy-tetrahydrodipicolinate synthase, chloroplastic from Zea mays (Maize).